The primary structure comprises 455 residues: MLPSTIVEILCSKTAQADVHVGGWIRTRRNAKGFVFLELNDGSCLKNIQCIINEGSAAWDMLDGVNTGACVSVYGKLVPSPGRGQDWEIQVEKMVVHGLAAPEVFPLQKKRHSDEFLRTIAHLRVRTNKYGAIFRIRAEAAQAIHNYFYKKGFYYIHTPILTGSDCEGAGEMFRVTTAHSSNDSQSSDNFFGKECSLTVSGQLEAECLAMGLGKVYTFGPTFRAENSNTPRHAAEFWMVEPEMAFADLQDNMNLAEELTCEVIRKVLQCHIDDIMLLDKYVQPGLIKALENIIAKPFIRCSYHDAITILLSSHKDFEFPVTFGLDLQSEHEKYLTEEYFKHPVIIFDYPKEIKAFYMRQNDDEETVAAMDLLVPRIGELIGGSQREERLDNLLSRIRELGQSIEEYWWYLDLRRFGTVPHAGFGLGFERLVMLLTGVSNIRDVLPFPRTPGYLEF.

Belongs to the class-II aminoacyl-tRNA synthetase family. As to quaternary structure, homodimer.

Its subcellular location is the cytoplasm. It carries out the reaction tRNA(Asn) + L-asparagine + ATP = L-asparaginyl-tRNA(Asn) + AMP + diphosphate + H(+). The polypeptide is Asparagine--tRNA ligase (Lawsonia intracellularis (strain PHE/MN1-00)).